The chain runs to 238 residues: Pyridoxine 5'-phosphate synthase (238 aa).

N7 serves as a coordination point for 3-amino-2-oxopropyl phosphate. 9–10 (DH) provides a ligand contact to 1-deoxy-D-xylulose 5-phosphate. R18 provides a ligand contact to 3-amino-2-oxopropyl phosphate. Residue H43 is the Proton acceptor of the active site. The 1-deoxy-D-xylulose 5-phosphate site is built by R45 and H50. Residue E70 is the Proton acceptor of the active site. T100 is a 1-deoxy-D-xylulose 5-phosphate binding site. Residue H190 is the Proton donor of the active site. Residues G191 and 212 to 213 (GH) each bind 3-amino-2-oxopropyl phosphate.

This sequence belongs to the PNP synthase family. As to quaternary structure, homooctamer; tetramer of dimers.

Its subcellular location is the cytoplasm. The catalysed reaction is 3-amino-2-oxopropyl phosphate + 1-deoxy-D-xylulose 5-phosphate = pyridoxine 5'-phosphate + phosphate + 2 H2O + H(+). It functions in the pathway cofactor biosynthesis; pyridoxine 5'-phosphate biosynthesis; pyridoxine 5'-phosphate from D-erythrose 4-phosphate: step 5/5. Functionally, catalyzes the complicated ring closure reaction between the two acyclic compounds 1-deoxy-D-xylulose-5-phosphate (DXP) and 3-amino-2-oxopropyl phosphate (1-amino-acetone-3-phosphate or AAP) to form pyridoxine 5'-phosphate (PNP) and inorganic phosphate. The polypeptide is Pyridoxine 5'-phosphate synthase (Prochlorococcus marinus (strain MIT 9515)).